A 325-amino-acid polypeptide reads, in one-letter code: D-alanine--D-alanine ligase (325 aa).

In terms of domain architecture, ATP-grasp spans 102 to 300 (KQIFRAAGIP…FTELVERMLQ (199 aa)). An ATP-binding site is contributed by 130-185 (AAELGSPLVIKPSNNGSTVGISIVRDERSFAQGLELARSVSSRIFLERYVPGKEIT). Mg(2+) is bound by residues aspartate 254, glutamate 267, and asparagine 269.

It belongs to the D-alanine--D-alanine ligase family. Requires Mg(2+) as cofactor. Mn(2+) is required as a cofactor.

The protein localises to the cytoplasm. It carries out the reaction 2 D-alanine + ATP = D-alanyl-D-alanine + ADP + phosphate + H(+). Its pathway is cell wall biogenesis; peptidoglycan biosynthesis. Its function is as follows. Cell wall formation. The sequence is that of D-alanine--D-alanine ligase from Synechococcus sp. (strain JA-2-3B'a(2-13)) (Cyanobacteria bacterium Yellowstone B-Prime).